A 256-amino-acid chain; its full sequence is Type III pantothenate kinase (256 aa).

ATP is bound at residue 6-13 (DCGNTNTV). Substrate is bound at residue 107-110 (GPDR). The active-site Proton acceptor is D109. D129 serves as a coordination point for K(+). T132 lines the ATP pocket. T184 provides a ligand contact to substrate.

Belongs to the type III pantothenate kinase family. In terms of assembly, homodimer. It depends on NH4(+) as a cofactor. The cofactor is K(+).

It localises to the cytoplasm. It carries out the reaction (R)-pantothenate + ATP = (R)-4'-phosphopantothenate + ADP + H(+). It participates in cofactor biosynthesis; coenzyme A biosynthesis; CoA from (R)-pantothenate: step 1/5. Catalyzes the phosphorylation of pantothenate (Pan), the first step in CoA biosynthesis. The sequence is that of Type III pantothenate kinase from Dinoroseobacter shibae (strain DSM 16493 / NCIMB 14021 / DFL 12).